Here is a 410-residue protein sequence, read N- to C-terminus: Probable peptidoglycan glycosyltransferase FtsW (410 aa).

9 consecutive transmembrane segments (helical) span residues 39–59 (LDPL…VMVY), 78–98 (YFLL…LAAF), 108–128 (FAPW…IPGV), 177–197 (GFLP…GEPD), 198–218 (FGAF…GGIN), 221–241 (VFAL…WLSP), 303–323 (IAEE…AILI), 342–362 (GLVA…NMGV), and 374–394 (LPLM…LAIL).

Belongs to the SEDS family. FtsW subfamily.

It localises to the cell inner membrane. It carries out the reaction [GlcNAc-(1-&gt;4)-Mur2Ac(oyl-L-Ala-gamma-D-Glu-L-Lys-D-Ala-D-Ala)](n)-di-trans,octa-cis-undecaprenyl diphosphate + beta-D-GlcNAc-(1-&gt;4)-Mur2Ac(oyl-L-Ala-gamma-D-Glu-L-Lys-D-Ala-D-Ala)-di-trans,octa-cis-undecaprenyl diphosphate = [GlcNAc-(1-&gt;4)-Mur2Ac(oyl-L-Ala-gamma-D-Glu-L-Lys-D-Ala-D-Ala)](n+1)-di-trans,octa-cis-undecaprenyl diphosphate + di-trans,octa-cis-undecaprenyl diphosphate + H(+). The protein operates within cell wall biogenesis; peptidoglycan biosynthesis. Functionally, peptidoglycan polymerase that is essential for cell division. The protein is Probable peptidoglycan glycosyltransferase FtsW of Aromatoleum aromaticum (strain DSM 19018 / LMG 30748 / EbN1) (Azoarcus sp. (strain EbN1)).